The primary structure comprises 81 residues: MKTLLLTLVVVTIVCLDLGYTLKCNKLIPIASKTCPAGKNLCYKMFMVATPKVPVKRGCIDVCPKSSLLVKYVCCNTDRCN.

Positions 1-21 (MKTLLLTLVVVTIVCLDLGYT) are cleaved as a signal peptide. Disulfide bonds link Cys-24–Cys-42, Cys-35–Cys-59, Cys-63–Cys-74, and Cys-75–Cys-80.

Belongs to the three-finger toxin family. Short-chain subfamily. Type IA cytotoxin sub-subfamily. Monomer in solution; Homodimer and oligomer in the presence of negatively charged lipids forming a pore with a size ranging between 20 and 30 Angstroms. As to expression, expressed by the venom gland.

The protein localises to the secreted. It localises to the target cell membrane. Functionally, shows cytolytic activity on many different cells by forming pore in lipid membranes. In vivo, increases heart rate or kills the animal by cardiac arrest. In addition, it binds to heparin with high affinity, interacts with Kv channel-interacting protein 1 (KCNIP1) in a calcium-independent manner, and binds to integrin alpha-V/beta-3 (ITGAV/ITGB3) with moderate affinity. The polypeptide is Cytotoxin 8 (Naja atra (Chinese cobra)).